The primary structure comprises 291 residues: Bifunctional protein FolD (291 aa).

Residues 167–169 and Ser192 each bind NADP(+); that span reads GRS.

This sequence belongs to the tetrahydrofolate dehydrogenase/cyclohydrolase family. In terms of assembly, homodimer.

The catalysed reaction is (6R)-5,10-methylene-5,6,7,8-tetrahydrofolate + NADP(+) = (6R)-5,10-methenyltetrahydrofolate + NADPH. It catalyses the reaction (6R)-5,10-methenyltetrahydrofolate + H2O = (6R)-10-formyltetrahydrofolate + H(+). Its pathway is one-carbon metabolism; tetrahydrofolate interconversion. Functionally, catalyzes the oxidation of 5,10-methylenetetrahydrofolate to 5,10-methenyltetrahydrofolate and then the hydrolysis of 5,10-methenyltetrahydrofolate to 10-formyltetrahydrofolate. The chain is Bifunctional protein FolD from Leptospira biflexa serovar Patoc (strain Patoc 1 / Ames).